We begin with the raw amino-acid sequence, 556 residues long: Formate--tetrahydrofolate ligase (556 aa).

65-72 (TPAGEGKS) is a binding site for ATP.

This sequence belongs to the formate--tetrahydrofolate ligase family.

It carries out the reaction (6S)-5,6,7,8-tetrahydrofolate + formate + ATP = (6R)-10-formyltetrahydrofolate + ADP + phosphate. Its pathway is one-carbon metabolism; tetrahydrofolate interconversion. This chain is Formate--tetrahydrofolate ligase, found in Streptococcus mutans serotype c (strain ATCC 700610 / UA159).